A 231-amino-acid chain; its full sequence is Orotidine 5'-phosphate decarboxylase (231 aa).

Substrate is bound by residues Asp11, Lys33, 60-69 (DLKFHDIPNT), Thr117, Arg178, Gln187, Gly207, and Arg208. Lys62 acts as the Proton donor in catalysis.

It belongs to the OMP decarboxylase family. Type 1 subfamily. As to quaternary structure, homodimer.

It catalyses the reaction orotidine 5'-phosphate + H(+) = UMP + CO2. It participates in pyrimidine metabolism; UMP biosynthesis via de novo pathway; UMP from orotate: step 2/2. Catalyzes the decarboxylation of orotidine 5'-monophosphate (OMP) to uridine 5'-monophosphate (UMP). This Nitrosomonas eutropha (strain DSM 101675 / C91 / Nm57) protein is Orotidine 5'-phosphate decarboxylase.